Reading from the N-terminus, the 476-residue chain is Aspartyl/glutamyl-tRNA(Asn/Gln) amidotransferase subunit B (476 aa).

It belongs to the GatB/GatE family. GatB subfamily. Heterotrimer of A, B and C subunits.

The enzyme catalyses L-glutamyl-tRNA(Gln) + L-glutamine + ATP + H2O = L-glutaminyl-tRNA(Gln) + L-glutamate + ADP + phosphate + H(+). It carries out the reaction L-aspartyl-tRNA(Asn) + L-glutamine + ATP + H2O = L-asparaginyl-tRNA(Asn) + L-glutamate + ADP + phosphate + 2 H(+). Allows the formation of correctly charged Asn-tRNA(Asn) or Gln-tRNA(Gln) through the transamidation of misacylated Asp-tRNA(Asn) or Glu-tRNA(Gln) in organisms which lack either or both of asparaginyl-tRNA or glutaminyl-tRNA synthetases. The reaction takes place in the presence of glutamine and ATP through an activated phospho-Asp-tRNA(Asn) or phospho-Glu-tRNA(Gln). The protein is Aspartyl/glutamyl-tRNA(Asn/Gln) amidotransferase subunit B of Listeria monocytogenes serotype 4b (strain CLIP80459).